Reading from the N-terminus, the 140-residue chain is Protein S40-1 (140 aa).

Residues 16 to 58 (YFPIRRREDGNEKENNRPVDFRENSERVWNKSSRRSKTTPLPS) form a disordered region. Residues 20 to 44 (RRREDGNEKENNRPVDFRENSERVW) are compositionally biased toward basic and acidic residues.

This sequence belongs to the senescence regulator S40 family.

Its subcellular location is the cytoplasm. This Arabidopsis thaliana (Mouse-ear cress) protein is Protein S40-1.